Here is a 98-residue protein sequence, read N- to C-terminus: NADH-ubiquinone oxidoreductase chain 4L (98 aa).

A run of 3 helical transmembrane segments spans residues 1 to 21 (MSMV…GLLM), 29 to 49 (SLLC…ATIL), and 61 to 81 (IILL…LVTV).

This sequence belongs to the complex I subunit 4L family. Core subunit of respiratory chain NADH dehydrogenase (Complex I) which is composed of 45 different subunits.

It localises to the mitochondrion inner membrane. The catalysed reaction is a ubiquinone + NADH + 5 H(+)(in) = a ubiquinol + NAD(+) + 4 H(+)(out). Core subunit of the mitochondrial membrane respiratory chain NADH dehydrogenase (Complex I) which catalyzes electron transfer from NADH through the respiratory chain, using ubiquinone as an electron acceptor. Part of the enzyme membrane arm which is embedded in the lipid bilayer and involved in proton translocation. This Pusa caspica (Caspian seal) protein is NADH-ubiquinone oxidoreductase chain 4L (MT-ND4L).